Reading from the N-terminus, the 242-residue chain is Serine hydrolase cnsH (242 aa).

Active-site charge relay system residues include serine 56, aspartate 138, and histidine 216.

The protein belongs to the AB hydrolase 3 family.

Its pathway is alkaloid biosynthesis. Serine hydrolase; part of the gene cluster that mediates the biosynthesis of communesins, a prominent class of indole alkaloids with great potential as pharmaceuticals. Communesins are biosynthesized by the coupling of tryptamine and aurantioclavine, two building blocks derived from L-tryptophan. The L-tryptophan decarboxylase cnsB converts L-tryptophan to tryptamine, whereas the tryptophan dimethylallyltransferase cnsF converts L-tryptophan to 4-dimethylallyl tryptophan which is further transformed to aurantioclavine by the aurantioclavine synthase cnsA, probably aided by the catalase cnsD. The cytochrome P450 monooxygenase cnsC catalyzes the heterodimeric coupling between the two different indole moieties, tryptamine and aurantioclavine, to construct vicinal quaternary stereocenters and yield the heptacyclic communesin scaffold. The O-methyltransferase cnsE then methylates the communesin scaffold to produce communesin K, the simplest characterized communesin that contains the heptacyclic core. The dioxygenase cnsJ converts communesin K into communesin I. Acylation to introduce the hexadienyl group at position N16 of communesin I by the acyltransferase cnsK leads to the production of communesin B. The hexadienyl group is produced by the highly reducing polyketide synthase cnsI, before being hydrolytically removed from cnsI by the serine hydrolase cnsH, converted into hexadienyl-CoA by the CoA ligase cnsG, and then transferred to communesin I by cnsK. Surprisingly, cnsK may also be a promiscuous acyltransferase that can tolerate a range of acyl groups, including acetyl-, propionyl-, and butyryl-CoA, which lead to communesins A, G and H respectively. The roles of the alpha-ketoglutarate-dependent dioxygenases cnsM and cnsP have still to be determined. The chain is Serine hydrolase cnsH from Penicillium expansum (Blue mold rot fungus).